A 499-amino-acid chain; its full sequence is Cytochrome P450 81Q32 (499 aa).

The chain crosses the membrane as a helical span at residues 5–25 (TLLYTFLAVVLLSISLKLFPV). N-linked (GlcNAc...) asparagine glycosylation is found at N112, N183, and N266. C434 lines the heme pocket.

This sequence belongs to the cytochrome P450 family. In terms of tissue distribution, expressed in leaf epidermis and in the leaf internal phloem-associated parenchyma (IPAP) inside the mesophyll.

It is found in the membrane. The protein is Cytochrome P450 81Q32 of Catharanthus roseus (Madagascar periwinkle).